The primary structure comprises 172 residues: Acetolactate synthase small subunit (172 aa).

An ACT domain is found at 4–78; the sequence is TLSVLVEDEA…NVIKVQDITE (75 aa).

This sequence belongs to the acetolactate synthase small subunit family. In terms of assembly, dimer of large and small chains.

It catalyses the reaction 2 pyruvate + H(+) = (2S)-2-acetolactate + CO2. Its pathway is amino-acid biosynthesis; L-isoleucine biosynthesis; L-isoleucine from 2-oxobutanoate: step 1/4. It participates in amino-acid biosynthesis; L-valine biosynthesis; L-valine from pyruvate: step 1/4. The sequence is that of Acetolactate synthase small subunit (ilvH) from Synechocystis sp. (strain ATCC 27184 / PCC 6803 / Kazusa).